Consider the following 88-residue polypeptide: Probable Fe(2+)-trafficking protein (88 aa).

It belongs to the Fe(2+)-trafficking protein family.

In terms of biological role, could be a mediator in iron transactions between iron acquisition and iron-requiring processes, such as synthesis and/or repair of Fe-S clusters in biosynthetic enzymes. The protein is Probable Fe(2+)-trafficking protein of Teredinibacter turnerae (strain ATCC 39867 / T7901).